A 165-amino-acid chain; its full sequence is SsrA-binding protein (165 aa).

Belongs to the SmpB family.

The protein resides in the cytoplasm. Required for rescue of stalled ribosomes mediated by trans-translation. Binds to transfer-messenger RNA (tmRNA), required for stable association of tmRNA with ribosomes. tmRNA and SmpB together mimic tRNA shape, replacing the anticodon stem-loop with SmpB. tmRNA is encoded by the ssrA gene; the 2 termini fold to resemble tRNA(Ala) and it encodes a 'tag peptide', a short internal open reading frame. During trans-translation Ala-aminoacylated tmRNA acts like a tRNA, entering the A-site of stalled ribosomes, displacing the stalled mRNA. The ribosome then switches to translate the ORF on the tmRNA; the nascent peptide is terminated with the 'tag peptide' encoded by the tmRNA and targeted for degradation. The ribosome is freed to recommence translation, which seems to be the essential function of trans-translation. In Ruthia magnifica subsp. Calyptogena magnifica, this protein is SsrA-binding protein.